The sequence spans 136 residues: Histone H3 (136 aa).

A disordered region spans residues M1 to K43. N6,N6,N6-trimethyllysine; alternate is present on K5. At K5 the chain carries N6,N6-dimethyllysine; alternate. Residues K5 and K10 each carry the N6-methyllysine; alternate modification. Position 10 is an N6-acetyllysine; alternate (K10). Residue S11 is modified to Phosphoserine. N6,N6-dimethyllysine; alternate is present on K15. N6-methyllysine; alternate is present on residues K15, K19, K24, K28, and K37. 5 positions are modified to N6-acetyllysine; alternate: K15, K19, K24, K28, and K37. N6,N6,N6-trimethyllysine; alternate occurs at positions 28 and 37. N6,N6-dimethyllysine; alternate is present on residues K28 and K37. An N6-acetyllysine mark is found at K57 and K65. An N6,N6,N6-trimethyllysine; alternate modification is found at K80. Residue K80 is modified to N6,N6-dimethyllysine; alternate. K80 is modified (N6-methyllysine; alternate).

The protein belongs to the histone H3 family. As to quaternary structure, the nucleosome is a histone octamer containing two molecules each of H2A, H2B, H3 and H4 assembled in one H3-H4 heterotetramer and two H2A-H2B heterodimers. The octamer wraps approximately 147 bp of DNA. Phosphorylated by IPL1 to form H3S10ph. H3S10ph promotes subsequent H3K14ac formation by GCN5 and is required for transcriptional activation through TBP recruitment to the promoters. In terms of processing, mono-, di- and trimethylated by the COMPASS complex to form H3K4me1/2/3. H3K4me activates gene expression by regulating transcription elongation and plays a role in telomere length maintenance. H3K4me enrichment correlates with transcription levels, and occurs in a 5' to 3' gradient with H3K4me3 enrichment at the 5'-end of genes, shifting to H3K4me2 and then H3K4me1. Methylated by SET2 to form H3K36me. H3K36me represses gene expression. Methylated by DOT1 to form H3K79me. H3K79me is required for association of SIR proteins with telomeric regions and for telomeric silencing. The COMPASS-mediated formation of H3K4me2/3 and the DOT1-mediated formation of H3K79me require H2BK123ub1. Post-translationally, acetylation of histone H3 leads to transcriptional activation. H3K14ac formation by GCN5 is promoted by H3S10ph. H3K14ac can also be formed by ESA1. H3K56ac formation occurs predominantly in newly synthesized H3 molecules during G1, S and G2/M of the cell cycle and may be involved in DNA repair.

Its subcellular location is the nucleus. The protein resides in the chromosome. Its function is as follows. Core component of nucleosome. Nucleosomes wrap and compact DNA into chromatin, limiting DNA accessibility to the cellular machineries which require DNA as a template. Histones thereby play a central role in transcription regulation, DNA repair, DNA replication and chromosomal stability. DNA accessibility is regulated via a complex set of post-translational modifications of histones, also called histone code, and nucleosome remodeling. This Candida glabrata (strain ATCC 2001 / BCRC 20586 / JCM 3761 / NBRC 0622 / NRRL Y-65 / CBS 138) (Yeast) protein is Histone H3 (HHT1).